The chain runs to 304 residues: Killer cell immunoglobulin-like receptor 2DS4 (304 aa).

A signal peptide spans Met-1 to Pro-21. The Extracellular portion of the chain corresponds to Gln-22 to His-245. Ig-like C2-type domains lie at Glu-42–Ser-107 and Gly-142–Ala-205. An intrachain disulfide couples Cys-49 to Cys-100. 5 N-linked (GlcNAc...) asparagine glycosylation sites follow: Asn-67, Asn-84, Asn-144, Asn-178, and Asn-211. Cysteines 149 and 198 form a disulfide. The tract at residues Val-220–Gly-239 is disordered. The chain crosses the membrane as a helical span at residues Val-246 to Leu-265. The Cytoplasmic segment spans residues His-266 to Ala-304. The interval Gln-280–Ala-304 is disordered.

It belongs to the immunoglobulin superfamily. Interacts with HLA-F; this interaction is direct.

Its subcellular location is the cell membrane. Functionally, receptor on natural killer (NK) cells for HLA-C alleles. Does not inhibit the activity of NK cells. This Homo sapiens (Human) protein is Killer cell immunoglobulin-like receptor 2DS4.